Reading from the N-terminus, the 331-residue chain is MAQLFYDSDADLGLLNGKTVAIIGYGSQGHAHALNLKDSGVDVVVGLYEGSRSAEKARADGLEVLSVAEAAAKADWIMVLLPDEFQKDVYAKEIASHLSSGKVLSFAHGFNIRFGLIQPPADVDVVMIAPKGPGHTVRWEYQNGQGVPALFAIEQDASGQARALAMAYAKGIGGTRAGILETNFKEETETDLFGEQAVLCGGLSELVKAGFETLVEAGYQPELAYFECLHEVKLIVDLMVKGGLTAMRDSISNTAEYGDYVSGPRLINADTKAEMKRILADIQDGTFAKNFVAECESGKPEMKKIRDRDANHPIEQVGKGLRAMFSWLKTA.

In terms of domain architecture, KARI N-terminal Rossmann spans 2 to 182 (AQLFYDSDAD…GGTRAGILET (181 aa)). Residues 25-28 (YGSQ), Ser51, Ser53, and 83-86 (DEFQ) contribute to the NADP(+) site. Residue His108 is part of the active site. Residue Gly134 coordinates NADP(+). A KARI C-terminal knotted domain is found at 183 to 328 (NFKEETETDL…KGLRAMFSWL (146 aa)). Asp191, Glu195, Glu227, and Glu231 together coordinate Mg(2+). Ser252 serves as a coordination point for substrate.

This sequence belongs to the ketol-acid reductoisomerase family. Mg(2+) serves as cofactor.

The enzyme catalyses (2R)-2,3-dihydroxy-3-methylbutanoate + NADP(+) = (2S)-2-acetolactate + NADPH + H(+). The catalysed reaction is (2R,3R)-2,3-dihydroxy-3-methylpentanoate + NADP(+) = (S)-2-ethyl-2-hydroxy-3-oxobutanoate + NADPH + H(+). Its pathway is amino-acid biosynthesis; L-isoleucine biosynthesis; L-isoleucine from 2-oxobutanoate: step 2/4. It participates in amino-acid biosynthesis; L-valine biosynthesis; L-valine from pyruvate: step 2/4. Its function is as follows. Involved in the biosynthesis of branched-chain amino acids (BCAA). Catalyzes an alkyl-migration followed by a ketol-acid reduction of (S)-2-acetolactate (S2AL) to yield (R)-2,3-dihydroxy-isovalerate. In the isomerase reaction, S2AL is rearranged via a Mg-dependent methyl migration to produce 3-hydroxy-3-methyl-2-ketobutyrate (HMKB). In the reductase reaction, this 2-ketoacid undergoes a metal-dependent reduction by NADPH to yield (R)-2,3-dihydroxy-isovalerate. In Prochlorococcus marinus (strain MIT 9313), this protein is Ketol-acid reductoisomerase (NADP(+)).